A 475-amino-acid chain; its full sequence is Enolase (475 aa).

Gln179 is a binding site for (2R)-2-phosphoglycerate. Residue Glu221 is the Proton donor of the active site. Mg(2+) is bound by residues Asp258, Glu312, and Asp339. (2R)-2-phosphoglycerate contacts are provided by Lys364, Arg393, Ser394, and Lys415. Residue Lys364 is the Proton acceptor of the active site. The segment at 454–475 is disordered; the sequence is STPAATPKKSPAKKTTKAKSKK. Positions 463-475 are enriched in basic residues; it reads SPAKKTTKAKSKK.

Belongs to the enolase family. The cofactor is Mg(2+).

The protein resides in the cell membrane. Its subcellular location is the cytoplasm. It is found in the secreted. The protein localises to the cell surface. The catalysed reaction is (2R)-2-phosphoglycerate = phosphoenolpyruvate + H2O. Its pathway is carbohydrate degradation; glycolysis; pyruvate from D-glyceraldehyde 3-phosphate: step 4/5. Functionally, catalyzes the reversible conversion of 2-phosphoglycerate (2-PG) into phosphoenolpyruvate (PEP). It is essential for the degradation of carbohydrates via glycolysis. Its function is as follows. 'Moonlights' as a plasminogen receptor. Binds host (chicken) plasminogen; enolase antiserum inhibits M.gallisepticum adherence to chicken embryo fibroblasts. In Mycoplasmoides gallisepticum (strain R(low / passage 15 / clone 2)) (Mycoplasma gallisepticum), this protein is Enolase.